The following is a 625-amino-acid chain: 1-deoxy-D-xylulose-5-phosphate synthase (625 aa).

Thiamine diphosphate contacts are provided by residues His-80 and 121–123; that span reads GHS. Mg(2+) is bound at residue Asp-152. Thiamine diphosphate is bound by residues 153-154, Asn-181, Tyr-290, and Glu-371; that span reads GS. Position 181 (Asn-181) interacts with Mg(2+).

The protein belongs to the transketolase family. DXPS subfamily. Homodimer. Requires Mg(2+) as cofactor. Thiamine diphosphate is required as a cofactor.

It carries out the reaction D-glyceraldehyde 3-phosphate + pyruvate + H(+) = 1-deoxy-D-xylulose 5-phosphate + CO2. It functions in the pathway metabolic intermediate biosynthesis; 1-deoxy-D-xylulose 5-phosphate biosynthesis; 1-deoxy-D-xylulose 5-phosphate from D-glyceraldehyde 3-phosphate and pyruvate: step 1/1. Its function is as follows. Catalyzes the acyloin condensation reaction between C atoms 2 and 3 of pyruvate and glyceraldehyde 3-phosphate to yield 1-deoxy-D-xylulose-5-phosphate (DXP). The protein is 1-deoxy-D-xylulose-5-phosphate synthase of Haemophilus influenzae (strain PittGG).